A 558-amino-acid polypeptide reads, in one-letter code: Formate--tetrahydrofolate ligase (558 aa).

67-74 (TPAGEGKT) is an ATP binding site.

The protein belongs to the formate--tetrahydrofolate ligase family.

The catalysed reaction is (6S)-5,6,7,8-tetrahydrofolate + formate + ATP = (6R)-10-formyltetrahydrofolate + ADP + phosphate. It functions in the pathway one-carbon metabolism; tetrahydrofolate interconversion. This chain is Formate--tetrahydrofolate ligase, found in Roseobacter denitrificans (strain ATCC 33942 / OCh 114) (Erythrobacter sp. (strain OCh 114)).